Consider the following 538-residue polypeptide: Putative cysteine ligase BshC (538 aa).

Residues 419-445 are a coiled coil; it reads IEAKRQIQAMEQLLAEKYSELASYLEE.

It belongs to the BshC family.

In terms of biological role, involved in bacillithiol (BSH) biosynthesis. May catalyze the last step of the pathway, the addition of cysteine to glucosamine malate (GlcN-Mal) to generate BSH. This chain is Putative cysteine ligase BshC, found in Lysinibacillus sphaericus (strain C3-41).